Reading from the N-terminus, the 502-residue chain is CBL-interacting serine/threonine-protein kinase 13 (502 aa).

Residues 32 to 51 are disordered; that stretch reads TNKETSTPESPRSPRTPQGS. Over residues 35-48 the composition is skewed to low complexity; that stretch reads ETSTPESPRSPRTP. Residues 57–311 enclose the Protein kinase domain; it reads YEIGKLLGHG…IPEIMKHRWF (255 aa). ATP contacts are provided by residues 63–71 and Lys86; that span reads LGHGSFAKV. The active-site Proton acceptor is Asp179. The tract at residues 197 to 226 is activation loop; that stretch reads DFGLSVVSEQLKQEGICQTFCGTPAYLAPE. Ser201 carries the post-translational modification Phosphoserine. Thr215 is subject to Phosphothreonine. The disordered stretch occupies residues 331-359; sequence DDDNDDDDSSSLSSGRSSTASEGDAEFDI. Low complexity predominate over residues 340–352; sequence SSLSSGRSSTASE. The region spanning 366 to 387 is the NAF domain; sequence PRPASLNAFDILSFSDLSGLFE. Positions 390 to 419 are PPI; the sequence is GQGARFVSAAPMTKIISKLEEIAKEVKFMV.

This sequence belongs to the protein kinase superfamily. CAMK Ser/Thr protein kinase family. SNF1 subfamily. As to quaternary structure, interacts with CBL2 and CBL3. The cofactor is Mn(2+).

It carries out the reaction L-seryl-[protein] + ATP = O-phospho-L-seryl-[protein] + ADP + H(+). It catalyses the reaction L-threonyl-[protein] + ATP = O-phospho-L-threonyl-[protein] + ADP + H(+). Functionally, CIPK serine-threonine protein kinases interact with CBL proteins. Binding of a CBL protein to the regulatory NAF domain of CIPK protein lead to the activation of the kinase in a calcium-dependent manner. This chain is CBL-interacting serine/threonine-protein kinase 13 (CIPK13), found in Arabidopsis thaliana (Mouse-ear cress).